Here is a 478-residue protein sequence, read N- to C-terminus: Multidrug resistance outer membrane protein MdtQ (478 aa).

Residues 1 to 21 (MNRDSFYPAIACFPLLLMLAG) form the signal peptide. A lipid anchor (N-palmitoyl cysteine) is attached at cysteine 22. The S-diacylglycerol cysteine moiety is linked to residue cysteine 22.

It belongs to the outer membrane factor (OMF) (TC 1.B.17) family.

The protein resides in the cell outer membrane. In terms of biological role, could be involved in resistance to puromycin, acriflavine and tetraphenylarsonium chloride. The polypeptide is Multidrug resistance outer membrane protein MdtQ (mdtQ) (Escherichia coli O157:H7).